A 327-amino-acid chain; its full sequence is Malate dehydrogenase (327 aa).

NAD(+) is bound at residue 11-17 (GAAGQIS). Positions 92 and 98 each coordinate substrate. NAD(+)-binding positions include Asn105, Gln112, and 129–131 (VGN). Residues Asn131 and Arg162 each contribute to the substrate site. His187 serves as the catalytic Proton acceptor.

This sequence belongs to the LDH/MDH superfamily. MDH type 2 family.

It catalyses the reaction (S)-malate + NAD(+) = oxaloacetate + NADH + H(+). Functionally, catalyzes the reversible oxidation of malate to oxaloacetate. The chain is Malate dehydrogenase from Teredinibacter turnerae (strain ATCC 39867 / T7901).